The sequence spans 141 residues: MAPRDKRLSSTPLEVLFFLNGWYYATYFLLELLIFLYKGLLLPYPTANLVLDVVMLLLYLGIEVIRLFFGTKGNLCQRKMPLGISVALTFPSAMMASYYLLLQTYVLRLEAIMNSILLFFCGSELLLEMLTLATFSSMDRI.

The next 4 helical transmembrane spans lie at 15–35, 49–69, 82–102, and 115–135; these read VLFF…LLIF, LVLD…RLFF, LGIS…YLLL, and SILL…LATF.

As to quaternary structure, part of the tectonic-like complex (also named B9 complex). Interacts with TMEM107.

The protein resides in the membrane. Its subcellular location is the cytoplasm. It localises to the cytoskeleton. The protein localises to the cilium basal body. Its function is as follows. Part of the tectonic-like complex which is required for tissue-specific ciliogenesis and may regulate ciliary membrane composition. The protein is Transmembrane protein 216 (Tmem216) of Mus musculus (Mouse).